A 243-amino-acid polypeptide reads, in one-letter code: Ubiquinone/menaquinone biosynthesis C-methyltransferase UbiE (243 aa).

S-adenosyl-L-methionine is bound by residues Thr69, Asp90, and 116 to 117 (DA).

This sequence belongs to the class I-like SAM-binding methyltransferase superfamily. MenG/UbiE family.

The catalysed reaction is a 2-demethylmenaquinol + S-adenosyl-L-methionine = a menaquinol + S-adenosyl-L-homocysteine + H(+). It catalyses the reaction a 2-methoxy-6-(all-trans-polyprenyl)benzene-1,4-diol + S-adenosyl-L-methionine = a 5-methoxy-2-methyl-3-(all-trans-polyprenyl)benzene-1,4-diol + S-adenosyl-L-homocysteine + H(+). It participates in quinol/quinone metabolism; menaquinone biosynthesis; menaquinol from 1,4-dihydroxy-2-naphthoate: step 2/2. It functions in the pathway cofactor biosynthesis; ubiquinone biosynthesis. Its function is as follows. Methyltransferase required for the conversion of demethylmenaquinol (DMKH2) to menaquinol (MKH2) and the conversion of 2-polyprenyl-6-methoxy-1,4-benzoquinol (DDMQH2) to 2-polyprenyl-3-methyl-6-methoxy-1,4-benzoquinol (DMQH2). The sequence is that of Ubiquinone/menaquinone biosynthesis C-methyltransferase UbiE from Burkholderia cenocepacia (strain ATCC BAA-245 / DSM 16553 / LMG 16656 / NCTC 13227 / J2315 / CF5610) (Burkholderia cepacia (strain J2315)).